Reading from the N-terminus, the 320-residue chain is cUMP-AMP-activated phospholipase (320 aa).

Residues L23–I204 enclose the PNPLA domain. The GXGXXG signature appears at G27 to G32. Positions G59–G63 match the GXSXG motif. S61 functions as the Nucleophile in the catalytic mechanism. D191 functions as the Proton acceptor in the catalytic mechanism. A DGA/G motif is present at residues D191–G193.

It belongs to the patatin family.

It catalyses the reaction a 1,2-diacyl-sn-glycero-3-phosphocholine + H2O = a 2-acyl-sn-glycero-3-phosphocholine + a fatty acid + H(+). Phospholipase activity is specifically activated upon 3',3'-cUAMP binding. Is not activated by the other cyclic dinucleotides 3',3'-cGAMP, 3',3'-c-diAMP and 3',3'-c-diGMP. Therefore, is specifically activated by only the nucleotide synthesized from its adjacently encoded nucleotidyltransferase (CdnE). In terms of biological role, effector phospholipase of a CBASS antivirus system. CBASS (cyclic oligonucleotide-based antiphage signaling system) provides immunity against bacteriophage. The CD-NTase protein synthesizes cyclic nucleotides in response to infection; these serve as specific second messenger signals. The signals activate a diverse range of effectors, leading to bacterial cell death and thus abortive phage infection. A type II-A(UA) CBASS system. Its function is as follows. Phospholipase that is activated upon binding to the cyclic dinucleotide (CDN) second messenger 3',3'-cyclic UMP-AMP (3',3'-cUAMP). The chain is cUMP-AMP-activated phospholipase from Escherichia coli.